Consider the following 233-residue polypeptide: MSVVRENGVIVAIDGPSGAGKSSLTKLLAKRLGYIHIDTGAMFRAVALSAQRAGIASDDDAGLAELCRGLDITFARDGEACRVLANGEDVSREIRTEEIGLLTSTVSARQPVRQALLEMQRKMGAKGGVILEGRDIGTVVFPDAEVKFFLSASAEERGRRRYLELAARGESATLEETIAKVVQRDRQDEGREHAPLKQAEDAVPIDSTSLTIEEVLELMERTVKERLAQGDKG.

Residue 15-23 participates in ATP binding; that stretch reads GPSGAGKSS. Positions 183–200 are enriched in basic and acidic residues; it reads QRDRQDEGREHAPLKQAE. Positions 183–203 are disordered; it reads QRDRQDEGREHAPLKQAEDAV.

Belongs to the cytidylate kinase family. Type 1 subfamily.

It localises to the cytoplasm. It catalyses the reaction CMP + ATP = CDP + ADP. The enzyme catalyses dCMP + ATP = dCDP + ADP. The protein is Cytidylate kinase of Geobacter sp. (strain M21).